Consider the following 444-residue polypeptide: Glucoside xylosyltransferase 2 (444 aa).

Residues 1–4 (MKLR) are Cytoplasmic-facing. Residues 5–25 (SKAAALLLLALAVLLLALLSL) traverse the membrane as a helical; Signal-anchor for type II membrane protein segment. The Lumenal segment spans residues 26–444 (RARRDPEPPG…IIHMGPNPMS (419 aa)). Positions 31-101 (PEPPGFPARP…LARRPGETRS (71 aa)) are disordered. The span at 68–83 (RSPRRQPPRLRPRAGR) shows a compositional bias: basic residues. Residues 87-101 (ASREKLARRPGETRS) show a composition bias toward basic and acidic residues. Asn275 is a glycosylation site (N-linked (GlcNAc...) asparagine).

This sequence belongs to the glycosyltransferase 8 family.

The protein resides in the membrane. The enzyme catalyses 3-O-(beta-D-glucosyl)-L-seryl-[EGF-like domain protein] + UDP-alpha-D-xylose = 3-O-[alpha-D-xylosyl-(1-&gt;3)-beta-D-glucosyl]-L-seryl-[EGF-like domain protein] + UDP + H(+). In terms of biological role, glycosyltransferase which elongates the O-linked glucose attached to EGF-like repeats in the extracellular domain of Notch proteins by catalyzing the addition of xylose. The polypeptide is Glucoside xylosyltransferase 2 (Gxylt2) (Mus musculus (Mouse)).